The following is a 206-amino-acid chain: Peptidyl-tRNA hydrolase (206 aa).

Tyr-14 is a tRNA binding site. The active-site Proton acceptor is His-19. Tyr-64, Asn-66, and Asn-112 together coordinate tRNA.

It belongs to the PTH family. As to quaternary structure, monomer.

It localises to the cytoplasm. It carries out the reaction an N-acyl-L-alpha-aminoacyl-tRNA + H2O = an N-acyl-L-amino acid + a tRNA + H(+). In terms of biological role, hydrolyzes ribosome-free peptidyl-tRNAs (with 1 or more amino acids incorporated), which drop off the ribosome during protein synthesis, or as a result of ribosome stalling. Catalyzes the release of premature peptidyl moieties from peptidyl-tRNA molecules trapped in stalled 50S ribosomal subunits, and thus maintains levels of free tRNAs and 50S ribosomes. The polypeptide is Peptidyl-tRNA hydrolase (Rhodopseudomonas palustris (strain ATCC BAA-98 / CGA009)).